The chain runs to 553 residues: Putative transport protein YidE (553 aa).

5 helical membrane-spanning segments follow: residues 4–24 (IALT…IGNV), 28–48 (GIGL…HFVS), 65–85 (FGLI…FFAS), 95–115 (LFAV…HKLF), and 158–178 (MSYA…MWML). 2 RCK C-terminal domains span residues 191–276 (QQHE…VIGQ) and 279–361 (DTSL…VLGN). The next 6 membrane-spanning stretches (helical) occupy residues 371–391 (MLPV…PVFV), 393–413 (GFPA…ALIL), 439–459 (IVLF…NTLV), 464–484 (LSWI…VGIL), 493–513 (YLTM…LAFA), and 533–553 (LVMF…WSIG).

It belongs to the AAE transporter (TC 2.A.81) family. YidE subfamily.

Its subcellular location is the cell membrane. The sequence is that of Putative transport protein YidE from Escherichia coli O7:K1 (strain IAI39 / ExPEC).